Reading from the N-terminus, the 324-residue chain is Ferrochelatase (324 aa).

Histidine 197 and glutamate 278 together coordinate Fe cation.

The protein belongs to the ferrochelatase family.

Its subcellular location is the cytoplasm. The catalysed reaction is heme b + 2 H(+) = protoporphyrin IX + Fe(2+). It participates in porphyrin-containing compound metabolism; protoheme biosynthesis; protoheme from protoporphyrin-IX: step 1/1. Its function is as follows. Catalyzes the ferrous insertion into protoporphyrin IX. This is Ferrochelatase from Aeromonas hydrophila subsp. hydrophila (strain ATCC 7966 / DSM 30187 / BCRC 13018 / CCUG 14551 / JCM 1027 / KCTC 2358 / NCIMB 9240 / NCTC 8049).